A 502-amino-acid polypeptide reads, in one-letter code: Glycerol kinase (502 aa).

Thr15 contributes to the ADP binding site. ATP is bound by residues Thr15, Thr16, and Ser17. Thr15 contacts sn-glycerol 3-phosphate. Position 19 (Arg19) interacts with ADP. Sn-glycerol 3-phosphate contacts are provided by Arg85, Glu86, and Tyr137. 3 residues coordinate glycerol: Arg85, Glu86, and Tyr137. His233 is subject to Phosphohistidine; by HPr. Asp247 contacts sn-glycerol 3-phosphate. Residues Asp247 and Gln248 each coordinate glycerol. Residues Thr269 and Gly312 each contribute to the ADP site. ATP contacts are provided by Thr269, Gly312, Gln316, and Gly413. ADP is bound by residues Gly413 and Asn417.

It belongs to the FGGY kinase family. In terms of assembly, homotetramer and homodimer (in equilibrium). In terms of processing, the phosphoenolpyruvate-dependent sugar phosphotransferase system (PTS), including enzyme I, and histidine-containing protein (HPr) are required for the phosphorylation, which leads to the activation of the enzyme.

It catalyses the reaction glycerol + ATP = sn-glycerol 3-phosphate + ADP + H(+). It participates in polyol metabolism; glycerol degradation via glycerol kinase pathway; sn-glycerol 3-phosphate from glycerol: step 1/1. With respect to regulation, activated by phosphorylation and inhibited by fructose 1,6-bisphosphate (FBP). In terms of biological role, key enzyme in the regulation of glycerol uptake and metabolism. Catalyzes the phosphorylation of glycerol to yield sn-glycerol 3-phosphate. The protein is Glycerol kinase of Streptococcus agalactiae serotype Ia (strain ATCC 27591 / A909 / CDC SS700).